The sequence spans 564 residues: Probable beta-glucosidase btgE (564 aa).

The signal sequence occupies residues 1–18 (MRGAFLATAAAIAGTAMA). Residues 285–304 (ATSSVAPSSSPSKPAAPSGA) form a disordered region. N-linked (GlcNAc...) asparagine glycosylation is present at Asn-404. Glu-405 functions as the Proton donor in the catalytic mechanism. Glu-501 serves as the catalytic Nucleophile.

It belongs to the glycosyl hydrolase 17 family.

It is found in the secreted. The protein resides in the cell wall. The enzyme catalyses Hydrolysis of terminal, non-reducing beta-D-glucosyl residues with release of beta-D-glucose.. It participates in glycan metabolism; cellulose degradation. Functionally, beta-glucosidases are one of a number of cellulolytic enzymes involved in the degradation of cellulosic biomass. Catalyzes the last step releasing glucose from the inhibitory cellobiose. The sequence is that of Probable beta-glucosidase btgE (btgE) from Aspergillus clavatus (strain ATCC 1007 / CBS 513.65 / DSM 816 / NCTC 3887 / NRRL 1 / QM 1276 / 107).